The primary structure comprises 366 residues: Probable dual-specificity RNA methyltransferase RlmN (366 aa).

Catalysis depends on glutamate 108, which acts as the Proton acceptor. Positions 114 to 352 (YSDRSTLCIS…CTVRDTKGQE (239 aa)) constitute a Radical SAM core domain. Cysteine 121 and cysteine 357 are disulfide-bonded. [4Fe-4S] cluster contacts are provided by cysteine 128, cysteine 132, and cysteine 135. S-adenosyl-L-methionine contacts are provided by residues 178 to 179 (GE), serine 212, 235 to 237 (SLH), and asparagine 314. Residue cysteine 357 is the S-methylcysteine intermediate of the active site.

It belongs to the radical SAM superfamily. RlmN family. The cofactor is [4Fe-4S] cluster.

The protein localises to the cytoplasm. It carries out the reaction adenosine(2503) in 23S rRNA + 2 reduced [2Fe-2S]-[ferredoxin] + 2 S-adenosyl-L-methionine = 2-methyladenosine(2503) in 23S rRNA + 5'-deoxyadenosine + L-methionine + 2 oxidized [2Fe-2S]-[ferredoxin] + S-adenosyl-L-homocysteine. It catalyses the reaction adenosine(37) in tRNA + 2 reduced [2Fe-2S]-[ferredoxin] + 2 S-adenosyl-L-methionine = 2-methyladenosine(37) in tRNA + 5'-deoxyadenosine + L-methionine + 2 oxidized [2Fe-2S]-[ferredoxin] + S-adenosyl-L-homocysteine. Its function is as follows. Specifically methylates position 2 of adenine 2503 in 23S rRNA and position 2 of adenine 37 in tRNAs. This Corynebacterium glutamicum (strain ATCC 13032 / DSM 20300 / JCM 1318 / BCRC 11384 / CCUG 27702 / LMG 3730 / NBRC 12168 / NCIMB 10025 / NRRL B-2784 / 534) protein is Probable dual-specificity RNA methyltransferase RlmN.